Here is an 885-residue protein sequence, read N- to C-terminus: DNA mismatch repair protein MutS (885 aa).

Residue 640 to 647 (GPNMGGKS) participates in ATP binding.

The protein belongs to the DNA mismatch repair MutS family.

Its function is as follows. This protein is involved in the repair of mismatches in DNA. It is possible that it carries out the mismatch recognition step. This protein has a weak ATPase activity. The sequence is that of DNA mismatch repair protein MutS from Variovorax paradoxus (strain S110).